The primary structure comprises 70 residues: Large ribosomal subunit protein bL31 (70 aa).

Cys-16, Cys-18, Cys-37, and Cys-40 together coordinate Zn(2+).

It belongs to the bacterial ribosomal protein bL31 family. Type A subfamily. Part of the 50S ribosomal subunit. Zn(2+) serves as cofactor.

Binds the 23S rRNA. This chain is Large ribosomal subunit protein bL31, found in Pasteurella multocida (strain Pm70).